A 252-amino-acid polypeptide reads, in one-letter code: Type III pantothenate kinase (252 aa).

6-13 contributes to the ATP binding site; that stretch reads DIGNTSTA. Residue 104–107 coordinates substrate; the sequence is GADR. The active-site Proton acceptor is aspartate 106. Aspartate 128 serves as a coordination point for K(+). Threonine 131 is a binding site for ATP. Threonine 183 provides a ligand contact to substrate.

It belongs to the type III pantothenate kinase family. As to quaternary structure, homodimer. NH4(+) is required as a cofactor. K(+) serves as cofactor.

It localises to the cytoplasm. It catalyses the reaction (R)-pantothenate + ATP = (R)-4'-phosphopantothenate + ADP + H(+). It participates in cofactor biosynthesis; coenzyme A biosynthesis; CoA from (R)-pantothenate: step 1/5. Catalyzes the phosphorylation of pantothenate (Pan), the first step in CoA biosynthesis. The sequence is that of Type III pantothenate kinase from Thermus thermophilus (strain ATCC 27634 / DSM 579 / HB8).